We begin with the raw amino-acid sequence, 120 residues long: MATKSPVNPKVPLVQEPDRDEGGAVVLERRTQKTKPPHMYQVVMLNDDYTPMEFVVVVIQEFFGKDLEAATRIMLKIHLDGKGVCGVYSKDVAATKVDQVLDAANKAGHPLKCISEPVGF.

Positions 1-20 (MATKSPVNPKVPLVQEPDRD) are disordered.

Belongs to the ClpS family. As to quaternary structure, binds to the N-terminal domain of the chaperone ClpA.

Its function is as follows. Involved in the modulation of the specificity of the ClpAP-mediated ATP-dependent protein degradation. The sequence is that of ATP-dependent Clp protease adapter protein ClpS from Albidiferax ferrireducens (strain ATCC BAA-621 / DSM 15236 / T118) (Rhodoferax ferrireducens).